A 434-amino-acid polypeptide reads, in one-letter code: Alpha-enolase (434 aa).

Serine 40 lines the Mg(2+) pocket. 2 residues coordinate substrate: histidine 158 and glutamate 167. The active-site Proton donor is the glutamate 210. Residues aspartate 245, glutamate 293, and aspartate 318 each contribute to the Mg(2+) site. Substrate-binding residues include glutamate 293 and aspartate 318. The Proton acceptor role is filled by lysine 343. Residues serine 370 to serine 373 and lysine 394 each bind substrate.

It belongs to the enolase family. Homodimer. Requires Mg(2+) as cofactor.

The protein resides in the cytoplasm. The enzyme catalyses (2R)-2-phosphoglycerate = phosphoenolpyruvate + H2O. The protein operates within carbohydrate degradation; glycolysis; pyruvate from D-glyceraldehyde 3-phosphate: step 4/5. This chain is Alpha-enolase (eno1), found in Xenopus laevis (African clawed frog).